Here is a 157-residue protein sequence, read N- to C-terminus: Protein Smg (157 aa).

It belongs to the Smg family.

The chain is Protein Smg from Yersinia pseudotuberculosis serotype O:1b (strain IP 31758).